The following is a 197-amino-acid chain: FMN-dependent NADH:quinone oxidoreductase (197 aa).

Residues Ser10, 16–18 (SKS), and 96–99 (MYNF) each bind FMN.

This sequence belongs to the azoreductase type 1 family. Homodimer. The cofactor is FMN.

It catalyses the reaction 2 a quinone + NADH + H(+) = 2 a 1,4-benzosemiquinone + NAD(+). The catalysed reaction is N,N-dimethyl-1,4-phenylenediamine + anthranilate + 2 NAD(+) = 2-(4-dimethylaminophenyl)diazenylbenzoate + 2 NADH + 2 H(+). Functionally, quinone reductase that provides resistance to thiol-specific stress caused by electrophilic quinones. Also exhibits azoreductase activity. Catalyzes the reductive cleavage of the azo bond in aromatic azo compounds to the corresponding amines. This Marinomonas sp. (strain MWYL1) protein is FMN-dependent NADH:quinone oxidoreductase.